The primary structure comprises 869 residues: Phosphatidylethanolamine N-methyltransferase (869 aa).

Ser-2 carries the post-translational modification N-acetylserine. At 2–55 (SSCKTTLSEMVGSVTKDRGTINVEARTRSSNVTFKPPVTHDMVRSLFDPTLKKS) the chain is on the lumenal side. Residues 56 to 76 (LLEKCIALAIISNFFICYWVF) form a helical membrane-spanning segment. The Cytoplasmic portion of the chain corresponds to 77 to 86 (QRFGLQFTKY). The chain crosses the membrane as a helical span at residues 87–107 (FFLVQYLFWRIAYNLGIGLVL). Residues 108–187 (HYQSHYETLT…EINVWLIFRQ (80 aa)) are Lumenal-facing. The chain crosses the membrane as a helical span at residues 188 to 208 (FVDLILMQDFVTYIIYVYLSI). The Cytoplasmic portion of the chain corresponds to 209-212 (PYSW). The helical transmembrane segment at 213–233 (VQIFNWRSLLGVILILFNIWV) threads the bilayer. At 234 to 258 (KLDAHRVVKDYAWYWGDFFFLEESE) the chain is on the lumenal side. A helical transmembrane segment spans residues 259-279 (LIFDGVFNISPHPMYSIGYLG). The Cytoplasmic portion of the chain corresponds to 280 to 291 (YYGLSLICNDYK). Residues 292 to 310 (VLLVSVFGHYSQFLFLKYV) form a helical membrane-spanning segment. Over 311 to 362 (ENPHIERTYGDGTDSDSQMNSRIDDLISKENYDYSRPLINMGLSFNNFNKLR) the chain is Lumenal. Residues 363-383 (FTDYFTIGTVAALMLGTIMNA) form a helical membrane-spanning segment. The Cytoplasmic portion of the chain corresponds to 384 to 389 (RFINLN). Residues 390–410 (YLFITVFVTKLVSWLFISTIL) form a helical membrane-spanning segment. Topologically, residues 411–439 (YKQSQSKWFTRLFLENGYTQVYSYEQWQF) are lumenal. A helical transmembrane segment spans residues 440–460 (IYNYYLVLTYTLMIIHTGLQI). The Cytoplasmic segment spans residues 461–463 (WSN). Residues 464 to 484 (FSNINNSQLIFGLILVALQTW) traverse the membrane as a helical segment. Topologically, residues 485–534 (CDKETRLAISDFGWFYGDFFLSNYISTRKLTSQGIYRYLNHPEAVLGVVG) are lumenal. A helical membrane pass occupies residues 535 to 555 (VWGTVLMTNFAVTNIILAVLW). The Cytoplasmic portion of the chain corresponds to 556–869 (TLTNFILVKF…DIKQTLDSLA (314 aa)).

The protein belongs to the class VI-like SAM-binding methyltransferase superfamily. CHO2 family.

The protein localises to the endoplasmic reticulum membrane. It carries out the reaction a 1,2-diacyl-sn-glycero-3-phosphoethanolamine + S-adenosyl-L-methionine = a 1,2-diacyl-sn-glycero-3-phospho-N-methylethanolamine + S-adenosyl-L-homocysteine + H(+). It functions in the pathway phospholipid metabolism; phosphatidylcholine biosynthesis. In terms of biological role, catalyzes the first step of the methylation pathway of phosphatidylcholine biosynthesis, the SAM-dependent methylation of phosphatidylethanolamine (PE) to phosphatidylmonomethylethanolamine (PMME). Preferentially converts di-C16:1 substrates. The chain is Phosphatidylethanolamine N-methyltransferase from Saccharomyces cerevisiae (strain ATCC 204508 / S288c) (Baker's yeast).